A 685-amino-acid chain; its full sequence is Heat shock protein homolog SSE1 (685 aa).

The tract at residues 651–685 (QALRSNQEASKMADLSAKLAAQRKAEAEAKENAKE) is disordered. Positions 673–685 (RKAEAEAKENAKE) are enriched in basic and acidic residues.

This sequence belongs to the heat shock protein 70 family.

Its subcellular location is the cytoplasm. The sequence is that of Heat shock protein homolog SSE1 (SSE1) from Naumovozyma castellii (Yeast).